We begin with the raw amino-acid sequence, 98 residues long: Large ribosomal subunit protein uL23 (98 aa).

It belongs to the universal ribosomal protein uL23 family. Part of the 50S ribosomal subunit. Contacts protein L29, and trigger factor when it is bound to the ribosome.

In terms of biological role, one of the early assembly proteins it binds 23S rRNA. One of the proteins that surrounds the polypeptide exit tunnel on the outside of the ribosome. Forms the main docking site for trigger factor binding to the ribosome. In Ruegeria sp. (strain TM1040) (Silicibacter sp.), this protein is Large ribosomal subunit protein uL23.